The chain runs to 360 residues: DNA replication and repair protein RecF (360 aa).

30–37 contacts ATP; the sequence is GRNAQGKT.

Belongs to the RecF family.

The protein resides in the cytoplasm. The RecF protein is involved in DNA metabolism; it is required for DNA replication and normal SOS inducibility. RecF binds preferentially to single-stranded, linear DNA. It also seems to bind ATP. The chain is DNA replication and repair protein RecF from Desulforudis audaxviator (strain MP104C).